A 723-amino-acid polypeptide reads, in one-letter code: CSC1-like protein ERD4 (723 aa).

Over 1-5 (MEFAS) the chain is Cytoplasmic. The helical transmembrane segment at 6 to 26 (FLVSLGTSAIIFVVLMFLFTW) threads the bilayer. The Extracellular portion of the chain corresponds to 27 to 90 (LSRRPGNVPV…TAVYFVFQST (64 aa)). Residues 91–111 (VLGIFALSALLLLPTLLPIAA) traverse the membrane as a helical segment. Residues 112 to 148 (TDNNLETSRSATDTTSNGTFSQLDNLSMANITKSSSR) lie on the Cytoplasmic side of the membrane. A helical transmembrane segment spans residues 149-169 (LWAFLGAVYWVSVVTYFMLWK). Residues 170–364 (AYKHVAALRA…IKFFSRIVRQ (195 aa)) lie on the Extracellular side of the membrane. Residues 365 to 385 (YVIYFLVAITILFYMIPIAFV) form a helical membrane-spanning segment. The Cytoplasmic portion of the chain corresponds to 386-416 (SAITTLANLQKALPFLKPIVDIAFIRTILES). Residues 417-437 (YLPQIALIVFLAMLPKFLMFL) traverse the membrane as a helical segment. Topologically, residues 438 to 456 (SKSEGIPSQSHAIRATSGK) are extracellular. Residues 457 to 477 (YFYFSVLNVFIGVTLAGSLFE) traverse the membrane as a helical segment. The Cytoplasmic portion of the chain corresponds to 478–508 (NLKALEEKPNSFITLLATSLPKSATFFLTYV). Residues 509–529 (ALKFFVGYGLELSRIIPLIIF) traverse the membrane as a helical segment. Over 530–572 (HLKKKYLCKTEAEVKEAWYPGDLSYATRVPSDMLILTITFCYS) the chain is Extracellular. Residues 573–593 (VIAPLILVFGVIYFGLGWLIL) form a helical membrane-spanning segment. At 594–614 (RNQALKVYVPSYESYGRMWPH) the chain is on the cytoplasmic side. A helical membrane pass occupies residues 615–635 (IHTRILAALFLFQLVMFGYLG). Residues 636 to 637 (VK) are Extracellular-facing. Residues 638-658 (IFVWAILLVPLIFISLIFGYV) form a helical membrane-spanning segment. Topologically, residues 659-723 (CRQKFYGGFE…YQDYAAISAA (65 aa)) are cytoplasmic.

This sequence belongs to the CSC1 (TC 1.A.17) family.

Its subcellular location is the plastid. The protein resides in the chloroplast membrane. In terms of biological role, acts as an osmosensitive calcium-permeable cation channel. This Brassica juncea (Indian mustard) protein is CSC1-like protein ERD4 (ERD4).